The following is a 239-amino-acid chain: RBPJ-interacting and tubulin-associated protein 1 (239 aa).

Positions 12–24 (LDLSITGHSTALP) match the Nuclear export signal motif. Disordered regions lie at residues 62-97 (APPSQTPLLWSPGEIKENKKTSSCRPKSTPAGTPRK) and 149-239 (LVQQ…PPWK). Positions 93–109 (GTPRKKIQYRVKSRTPS) match the Nuclear localization signal motif. Residues 129-158 (WVKKEDTVKIRPLLWSPSPRLVQQSSMQNA) are interaction with RBPJ/RBPSUH. Composition is skewed to polar residues over residues 149 to 159 (LVQQSSMQNAK) and 203 to 221 (RQRQSTPGRETVRSASCSG). Residues 158-239 (AKQGPLRAVH…VKMQERPPWK (82 aa)) are interaction with tubulin.

Belongs to the RITA family. Interacts with rbpj/rbpsuh.

Its subcellular location is the cytoplasm. The protein localises to the nucleus. In terms of biological role, tubulin-binding protein that acts as a negative regulator of Notch signaling pathway. Shuttles between the cytoplasm and the nucleus and mediates the nuclear export of rbpj/rbpsuh, thereby preventing the interaction between rbpj/rbpsuh and NICD product of Notch proteins (Notch intracellular domain), leading to down-regulate Notch-mediated transcription. May play a role in neurogenesis. This is RBPJ-interacting and tubulin-associated protein 1 (rita1) from Xenopus laevis (African clawed frog).